Reading from the N-terminus, the 196-residue chain is Ribonuclease S-F11 (196 aa).

Residues Cys-16 and Cys-21 are joined by a disulfide bond. The N-linked (GlcNAc...) asparagine glycan is linked to Asn-28. His-32 serves as the catalytic Proton donor. RNA-binding positions include His-32 and 69–70 (QL). Cystine bridges form between Cys-46–Cys-94, Cys-153–Cys-186, and Cys-169–Cys-180. The active site involves Gln-87. 90–91 (KH) is an RNA binding site. His-91 (proton acceptor) is an active-site residue.

This sequence belongs to the RNase T2 family. In terms of assembly, monomer.

The protein resides in the secreted. Its subcellular location is the extracellular space. It catalyses the reaction a ribonucleotidyl-ribonucleotide-RNA + H2O = a 3'-end 3'-phospho-ribonucleotide-RNA + a 5'-end dephospho-ribonucleoside-RNA + H(+). Self-incompatibility (SI) is the inherited ability of a flowering plant to prevent self-fertilization by discriminating between self and non-self pollen during pollination. In many species of the Solanaceae, self-incompatibility is controlled by the single, multiallelic locus S. This Nicotiana alata (Winged tobacco) protein is Ribonuclease S-F11.